We begin with the raw amino-acid sequence, 212 residues long: 2,3-bisphosphoglycerate-dependent phosphoglycerate mutase (212 aa).

Substrate contacts are provided by residues 9-16 (RHGQSEWN), 22-23 (TG), Arg-61, 88-91 (ERDY), Lys-99, 115-116 (RR), and 159-160 (GN). Catalysis depends on His-10, which acts as the Tele-phosphohistidine intermediate. Glu-88 (proton donor/acceptor) is an active-site residue.

Belongs to the phosphoglycerate mutase family. BPG-dependent PGAM subfamily. As to quaternary structure, homodimer.

The enzyme catalyses (2R)-2-phosphoglycerate = (2R)-3-phosphoglycerate. The protein operates within carbohydrate degradation; glycolysis; pyruvate from D-glyceraldehyde 3-phosphate: step 3/5. In terms of biological role, catalyzes the interconversion of 2-phosphoglycerate and 3-phosphoglycerate. The protein is 2,3-bisphosphoglycerate-dependent phosphoglycerate mutase of Methylorubrum extorquens (strain CM4 / NCIMB 13688) (Methylobacterium extorquens).